The primary structure comprises 137 residues: Phosphoribosyl-AMP cyclohydrolase (137 aa).

Residue aspartate 84 participates in Mg(2+) binding. Position 85 (cysteine 85) interacts with Zn(2+). Positions 86 and 88 each coordinate Mg(2+). The Zn(2+) site is built by cysteine 101 and cysteine 108.

It belongs to the PRA-CH family. As to quaternary structure, homodimer. Mg(2+) serves as cofactor. Zn(2+) is required as a cofactor.

The protein resides in the cytoplasm. The enzyme catalyses 1-(5-phospho-beta-D-ribosyl)-5'-AMP + H2O = 1-(5-phospho-beta-D-ribosyl)-5-[(5-phospho-beta-D-ribosylamino)methylideneamino]imidazole-4-carboxamide. Its pathway is amino-acid biosynthesis; L-histidine biosynthesis; L-histidine from 5-phospho-alpha-D-ribose 1-diphosphate: step 3/9. Functionally, catalyzes the hydrolysis of the adenine ring of phosphoribosyl-AMP. In Chlorobium limicola (strain DSM 245 / NBRC 103803 / 6330), this protein is Phosphoribosyl-AMP cyclohydrolase.